The sequence spans 478 residues: Catalase (478 aa).

The segment at 1–23 (MTNQLTTNEGQPWADNQHSQTAG) is disordered. Residues H53 and N126 contribute to the active site. Y336 serves as a coordination point for heme.

This sequence belongs to the catalase family. It depends on heme as a cofactor.

It localises to the cytoplasm. The enzyme catalyses 2 H2O2 = O2 + 2 H2O. Decomposes hydrogen peroxide into water and oxygen; serves to protect cells from the toxic effects of hydrogen peroxide. The chain is Catalase (katA) from Latilactobacillus sakei (Lactobacillus sakei).